The sequence spans 206 residues: Large ribosomal subunit protein uL4 (206 aa).

The segment at 63–97 (MYKQKGTGRARHHSARAPQFRGGGKAHGPVVRSHE) is disordered. Over residues 64 to 77 (YKQKGTGRARHHSA) the composition is skewed to basic residues.

It belongs to the universal ribosomal protein uL4 family. As to quaternary structure, part of the 50S ribosomal subunit.

Functionally, one of the primary rRNA binding proteins, this protein initially binds near the 5'-end of the 23S rRNA. It is important during the early stages of 50S assembly. It makes multiple contacts with different domains of the 23S rRNA in the assembled 50S subunit and ribosome. In terms of biological role, forms part of the polypeptide exit tunnel. This is Large ribosomal subunit protein uL4 from Rhizobium leguminosarum bv. trifolii (strain WSM2304).